The sequence spans 389 residues: Type III polyketide synthase 21 (389 aa).

The active-site Nucleophile is the C170.

Belongs to the thiolase-like superfamily. Chalcone/stilbene synthases family. Expressed in anthers. Expressed in young and adult flowers.

In terms of biological role, plant type III polyketide synthases (PKSs) that catalyzes the condensation of fatty acyl-CoA with malonyl-CoA to generate triketide and tetraketide alpha-pyrones, the main components of pollen exine and potential sporopollenin precursors. The polypeptide is Type III polyketide synthase 21 (PKS21) (Oryza sativa subsp. japonica (Rice)).